Consider the following 75-residue polypeptide: Tautomerase PptA (75 aa).

Pro-2 functions as the Proton acceptor; via imino nitrogen in the catalytic mechanism.

This sequence belongs to the 4-oxalocrotonate tautomerase family. PptA subfamily. As to quaternary structure, homodimer.

The protein localises to the cytoplasm. The protein is Tautomerase PptA of Klebsiella pneumoniae (strain 342).